The chain runs to 89 residues: Protein WFDC9 (89 aa).

The signal sequence occupies residues methionine 1 to glycine 23.

It is found in the secreted. This is Protein WFDC9 (WFDC9) from Homo sapiens (Human).